The sequence spans 308 residues: D-alanine--D-alanine ligase (308 aa).

Positions Lys106–Glu305 constitute an ATP-grasp domain. Residue Val136–Thr191 coordinates ATP. Mg(2+)-binding residues include Asp259, Glu272, and Asn274.

This sequence belongs to the D-alanine--D-alanine ligase family. Mg(2+) is required as a cofactor. Requires Mn(2+) as cofactor.

It is found in the cytoplasm. It catalyses the reaction 2 D-alanine + ATP = D-alanyl-D-alanine + ADP + phosphate + H(+). It participates in cell wall biogenesis; peptidoglycan biosynthesis. Cell wall formation. This chain is D-alanine--D-alanine ligase, found in Histophilus somni (strain 2336) (Haemophilus somnus).